The following is a 661-amino-acid chain: tRNA uridine 5-carboxymethylaminomethyl modification enzyme MnmG (661 aa).

Residue 13 to 18 (GGGHAG) participates in FAD binding. Residue 285–299 (GPRYCPSVEDKINRF) participates in NAD(+) binding.

Belongs to the MnmG family. As to quaternary structure, homodimer. Heterotetramer of two MnmE and two MnmG subunits. It depends on FAD as a cofactor.

It localises to the cytoplasm. Its function is as follows. NAD-binding protein involved in the addition of a carboxymethylaminomethyl (cmnm) group at the wobble position (U34) of certain tRNAs, forming tRNA-cmnm(5)s(2)U34. In Acidovorax sp. (strain JS42), this protein is tRNA uridine 5-carboxymethylaminomethyl modification enzyme MnmG.